The chain runs to 192 residues: UPF0301 protein BceJ2315_30870 (192 aa).

Belongs to the UPF0301 (AlgH) family.

The polypeptide is UPF0301 protein BceJ2315_30870 (Burkholderia cenocepacia (strain ATCC BAA-245 / DSM 16553 / LMG 16656 / NCTC 13227 / J2315 / CF5610) (Burkholderia cepacia (strain J2315))).